Reading from the N-terminus, the 228-residue chain is Phosphoribosylformylglycinamidine synthase subunit PurQ (228 aa).

Positions 2 to 228 constitute a Glutamine amidotransferase type-1 domain; it reads TVVVVQFGGS…DGKGILQAFG (227 aa). The Nucleophile role is filled by Cys88. Residues His205 and Glu207 contribute to the active site.

Part of the FGAM synthase complex composed of 1 PurL, 1 PurQ and 2 PurS subunits.

It is found in the cytoplasm. The enzyme catalyses N(2)-formyl-N(1)-(5-phospho-beta-D-ribosyl)glycinamide + L-glutamine + ATP + H2O = 2-formamido-N(1)-(5-O-phospho-beta-D-ribosyl)acetamidine + L-glutamate + ADP + phosphate + H(+). The catalysed reaction is L-glutamine + H2O = L-glutamate + NH4(+). Its pathway is purine metabolism; IMP biosynthesis via de novo pathway; 5-amino-1-(5-phospho-D-ribosyl)imidazole from N(2)-formyl-N(1)-(5-phospho-D-ribosyl)glycinamide: step 1/2. Functionally, part of the phosphoribosylformylglycinamidine synthase complex involved in the purines biosynthetic pathway. Catalyzes the ATP-dependent conversion of formylglycinamide ribonucleotide (FGAR) and glutamine to yield formylglycinamidine ribonucleotide (FGAM) and glutamate. The FGAM synthase complex is composed of three subunits. PurQ produces an ammonia molecule by converting glutamine to glutamate. PurL transfers the ammonia molecule to FGAR to form FGAM in an ATP-dependent manner. PurS interacts with PurQ and PurL and is thought to assist in the transfer of the ammonia molecule from PurQ to PurL. The protein is Phosphoribosylformylglycinamidine synthase subunit PurQ of Haloquadratum walsbyi (strain DSM 16790 / HBSQ001).